Here is a 537-residue protein sequence, read N- to C-terminus: CWF19-like protein 1 (537 aa).

Residues 297-323 (KQGRKRPSTGRDTRPPHAKQPRKPPQP) are disordered.

This sequence belongs to the CWF19 family.

The protein is CWF19-like protein 1 (Cwf19l1) of Mus musculus (Mouse).